We begin with the raw amino-acid sequence, 459 residues long: Phosphoglucosamine mutase (459 aa).

The active-site Phosphoserine intermediate is the serine 112. The Mg(2+) site is built by serine 112, aspartate 249, aspartate 251, and aspartate 253. At serine 112 the chain carries Phosphoserine.

The protein belongs to the phosphohexose mutase family. The cofactor is Mg(2+). Post-translationally, activated by phosphorylation.

It carries out the reaction alpha-D-glucosamine 1-phosphate = D-glucosamine 6-phosphate. Functionally, catalyzes the conversion of glucosamine-6-phosphate to glucosamine-1-phosphate. The chain is Phosphoglucosamine mutase from Synechococcus sp. (strain RCC307).